We begin with the raw amino-acid sequence, 591 residues long: Frizzled and smoothened-like protein F (591 aa).

Positions 1–17 (MKILIIFIIFIISYISG) are cleaved as a signal peptide. The Extracellular segment spans residues 18 to 244 (FEIPKGFGIG…KWDQLLTMSK (227 aa)). The FZ domain occupies 30–177 (IPDAECLNYI…GTFAVPCSDP (148 aa)). Disulfide bonds link C35/C105, C48/C98, and C123/C174. Residues N167, N187, N202, and N230 are each glycosylated (N-linked (GlcNAc...) asparagine). A helical membrane pass occupies residues 245–265 (ILSTISFILSLYNVLTFGIIN). Topologically, residues 266–275 (KKVSDPHKCT) are cytoplasmic. The chain crosses the membrane as a helical span at residues 276 to 296 (CFFSGSIALVNLCDIITYGIG). At 297-321 (YEELLCPEPGRSAKQQLDPVCGLTG) the chain is on the extracellular side. The helical transmembrane segment at 322–342 (AFFHLGITYCVLWSMTMGLVL) threads the bilayer. Residues 343-353 (YCSVKRQKWFK) lie on the Cytoplasmic side of the membrane. Residues 354 to 374 (FNYFLIGNTTFTITTVVIAAA) traverse the membrane as a helical segment. Over 375 to 397 (TSKFEAGLGSIECWIRDRWYAIS) the chain is Extracellular. Residues 398-418 (LFWIPCGIALLIGSFCIIAVI) form a helical membrane-spanning segment. The Cytoplasmic segment spans residues 419 to 442 (HEVYKTSKKSISNRNDLLQRELKP). Residues 443-463 (LLIVIFISGSFLYLFIFFFDI) traverse the membrane as a helical segment. Over 464-495 (ERKFGGYRSAVEDYVLCLLNGSQEECFTTGPS) the chain is Extracellular. N-linked (GlcNAc...) asparagine glycosylation occurs at N483. Residues 496 to 516 (YVPYFLFYLVIRWFGIIFFLF) form a helical membrane-spanning segment. Residues 517-591 (YGTSNIARKI…AVELESIKIN (75 aa)) are Cytoplasmic-facing. Residues 538 to 571 (SSISPKSTPKSSPKNSDSKINSNSTNNNNMILND) show a composition bias toward low complexity. Residues 538-573 (SSISPKSTPKSSPKNSDSKINSNSTNNNNMILNDNN) are disordered.

It belongs to the G-protein coupled receptor Fz/Smo family.

It localises to the membrane. The polypeptide is Frizzled and smoothened-like protein F (fslF) (Dictyostelium discoideum (Social amoeba)).